Here is a 146-residue protein sequence, read N- to C-terminus: VHLSGEEKTALATLWGKNVADEVGGEALGRLLVVYPWTQRFFDSFGDLSSASALMSNAKVKAHGKKVLDSFSEGLKHLDDLKGTFSSLSELHCDKLHVDPENFRLLGNMLVLVMAHHLGKDFTPAAQAAYQKVVAGVANALAHKYH.

Val-1 carries the N-acetylvaline modification. One can recognise a Globin domain in the interval 2-146; sequence HLSGEEKTAL…VANALAHKYH (145 aa). At Ser-44 the chain carries Phosphoserine. Lys-59 carries the post-translational modification N6-acetyllysine. Position 63 (His-63) interacts with heme b. Residue Lys-82 is modified to N6-acetyllysine. His-92 lines the heme b pocket. Cys-93 is subject to S-nitrosocysteine. Lys-144 is subject to N6-acetyllysine.

Belongs to the globin family. Heterotetramer of two alpha chains and two beta chains. In terms of tissue distribution, red blood cells.

In terms of biological role, involved in oxygen transport from the lung to the various peripheral tissues. In Tamiasciurus hudsonicus (American red squirrel), this protein is Hemoglobin subunit beta.